Reading from the N-terminus, the 200-residue chain is Insulin, isoform 2 (200 aa).

Residues 148–200 (EVDSSPQPQGSESLPAQPPAQPAPQPEPQQAREPSPEVSCCGLWPRRPQRSQN) are disordered. A compositionally biased stretch (pro residues) spans 163-174 (AQPPAQPAPQPE). Low complexity predominate over residues 175–184 (PQQAREPSPE).

As to expression, expressed in pancreas, eye and, to a lower extent, in limb.

In Homo sapiens (Human), this protein is Insulin, isoform 2 (INS-IGF2).